Consider the following 145-residue polypeptide: Plastocyanin, chloroplastic (145 aa).

The transit peptide at 1–47 (MKATLRAPASRASAVRPVASLKAAAQRVASVAGVSVASLALTLAAHA) directs the protein to the chloroplast. In terms of domain architecture, Plastocyanin-like spans 48–145 (DATVKLGADS…AGMVGKIIVQ (98 aa)). Residues His-85, Cys-130, His-133, and Met-138 each coordinate Cu cation.

This sequence belongs to the plastocyanin family. Cu(2+) is required as a cofactor.

The protein localises to the plastid. It is found in the chloroplast thylakoid membrane. Its function is as follows. Participates in electron transfer between P700 and the cytochrome b6-f complex in photosystem I. The polypeptide is Plastocyanin, chloroplastic (PETE) (Chlamydomonas reinhardtii (Chlamydomonas smithii)).